We begin with the raw amino-acid sequence, 87 residues long: DNA-directed RNA polymerase subunit omega (87 aa).

It belongs to the RNA polymerase subunit omega family. In terms of assembly, the RNAP catalytic core consists of 2 alpha, 1 beta, 1 beta' and 1 omega subunit. When a sigma factor is associated with the core the holoenzyme is formed, which can initiate transcription.

It catalyses the reaction RNA(n) + a ribonucleoside 5'-triphosphate = RNA(n+1) + diphosphate. In terms of biological role, promotes RNA polymerase assembly. Latches the N- and C-terminal regions of the beta' subunit thereby facilitating its interaction with the beta and alpha subunits. The protein is DNA-directed RNA polymerase subunit omega of Pseudomonas fluorescens (strain Pf0-1).